A 437-amino-acid polypeptide reads, in one-letter code: MSGSSMYKTKLCILFNKTGDCSRPNCTFAHGNAELRRPGESSFTGRRHNMDSDLRDRRHNMDSDLRDRLGRQFSPERRPSLDRSGRRVQRFSGHDNSMPFENRRDKDYRENRRFDERRDYAGGLKVGNRIEDRAEDGRNKFHGYNNVLEEQLKDVEMDVKMLTDDKLRLEASVERKAHEVDILTSRIQELETQLDREKDECRRITSSSKKFVKEYNRFLRAQDDLKRSEARLQKLGNQLSTYLAGSEGNNRDVGLDIVSDEETNGRNLRTACDPHNELQNTSSLSRKKHYVDQYTTKEPVEDGLIGRGEEEKVENEKKRPPCWNMLSSKSYSEEESGAWNDEDTINRSSSKEDNWKRRRFSIGTSATDKVILSTSMAAREFDDVAESEEENPEAANGSPLISLPPPPPFRDAHVQRDEDDVNGDVMEQKKAYDDDSV.

Residues Met-6–Ala-33 form a C3H1-type zinc finger. The tract at residues Leu-35–Asp-107 is disordered. The span at His-48–Gly-85 shows a compositional bias: basic and acidic residues. Positions Asn-145–Ala-244 form a coiled coil. Ser-259 carries the post-translational modification Phosphoserine. Disordered stretches follow at residues Arg-266–Phe-360 and Glu-380–Val-437. The span at Arg-307–Arg-319 shows a compositional bias: basic and acidic residues. Composition is skewed to acidic residues over residues Glu-333–Asp-343 and Asp-383–Pro-392. Over residues Met-426–Val-437 the composition is skewed to basic and acidic residues.

This Arabidopsis thaliana (Mouse-ear cress) protein is Zinc finger CCCH domain-containing protein 40.